Consider the following 183-residue polypeptide: CASP-like protein UU2 (183 aa).

At 1–33 the chain is on the cytoplasmic side; the sequence is MEESQQQSSKFDAPPSPYVPSRVYLAQIYWKKP. A helical membrane pass occupies residues 34–54; that stretch reads AIVVLRVLQFIFSLIAFSVMA. Topologically, residues 55 to 72 are extracellular; sequence DVLHDVQGSIKSLSYTVA. The chain crosses the membrane as a helical span at residues 73–93; that stretch reads IGVLACAYALAQLSFSLWCVI. Over 94-118 the chain is Cytoplasmic; it reads RGATSSAGVTPLYQYATFICDQMST. A helical transmembrane segment spans residues 119 to 139; the sequence is YFLISAASATATLIDVSGVCG. The Extracellular segment spans residues 140-156; the sequence is SNGSGTNLCSRSTASVT. A glycan (N-linked (GlcNAc...) asparagine) is linked at N141. Residues 157–177 form a helical membrane-spanning segment; sequence FAFLAFLAFSASSVLTGYYLV. At 178–183 the chain is on the cytoplasmic side; that stretch reads KCILKA.

Belongs to the Casparian strip membrane proteins (CASP) family. As to quaternary structure, homodimer and heterodimers.

It localises to the cell membrane. The chain is CASP-like protein UU2 from Selaginella moellendorffii (Spikemoss).